A 459-amino-acid polypeptide reads, in one-letter code: Argininosuccinate lyase (459 aa).

This sequence belongs to the lyase 1 family. Argininosuccinate lyase subfamily.

It localises to the cytoplasm. It catalyses the reaction 2-(N(omega)-L-arginino)succinate = fumarate + L-arginine. It functions in the pathway amino-acid biosynthesis; L-arginine biosynthesis; L-arginine from L-ornithine and carbamoyl phosphate: step 3/3. This chain is Argininosuccinate lyase, found in Prochlorococcus marinus (strain MIT 9215).